The following is a 173-amino-acid chain: MNKNCVEVGKITQARGLKGCVVARIEPILESFDPINYIFIKIGHTLVPYQVEEITGQAQQVFIKFQHISDRDSVRELIGSSIWLSQEILDKLVVQEEPYIDIIGYQVTDKYQGELGIIKDIEQFPLHVCLVVDYLDKELLIPYEPALIQDLDHEQKKIIVELPMGFLEAMGCK.

Residues 94–166 form the PRC barrel domain; the sequence is VQEEPYIDII…KIIVELPMGF (73 aa).

This sequence belongs to the RimM family. Binds ribosomal protein uS19.

The protein resides in the cytoplasm. Its function is as follows. An accessory protein needed during the final step in the assembly of 30S ribosomal subunit, possibly for assembly of the head region. Essential for efficient processing of 16S rRNA. May be needed both before and after RbfA during the maturation of 16S rRNA. It has affinity for free ribosomal 30S subunits but not for 70S ribosomes. This Amoebophilus asiaticus (strain 5a2) protein is Ribosome maturation factor RimM.